A 129-amino-acid chain; its full sequence is MDNVDFSKDIRDYSGLELAFLGDAIWELEIRKYYLQFGYNIPTLNKYVKAKVNAKYQSLIYKKIINDLDEEFKVIGKRAKNSNIKTFPRSCTVMEYKEATALEAIIGAMYLLKKEEEIKKIINIVIKGE.

Asp23 is a catalytic residue.

Belongs to the MrnC RNase family.

Might be a ribonuclease involved in RNA processing. In Fusobacterium nucleatum subsp. nucleatum (strain ATCC 25586 / DSM 15643 / BCRC 10681 / CIP 101130 / JCM 8532 / KCTC 2640 / LMG 13131 / VPI 4355), this protein is Mini-ribonuclease 3-like protein (mrnCL).